A 481-amino-acid polypeptide reads, in one-letter code: Phosphatidylinositol 4-kinase type 2-beta (481 aa).

Residues Met-1–Ala-11 are compositionally biased toward basic and acidic residues. The tract at residues Met-1–Asp-82 is disordered. Phosphoserine occurs at positions 12, 17, and 45. The segment covering Ala-53–Leu-64 has biased composition (acidic residues). The PI3K/PI4K catalytic domain occupies Gly-120–Arg-451. Positions Ile-126–Gly-132 are G-loop. Residues Ser-133 and Lys-148 each coordinate ATP. Residues Glu-153 to Tyr-155 form an important for substrate binding region. Positions Lys-161–Cys-174 are important for interaction with membranes. Residues Gln-257–Val-260 and Arg-271–Lys-272 each bind ATP. Residues Lys-264 to Lys-272 are important for interaction with membranes. Positions Arg-301–Asn-309 are catalytic loop. The segment at Ala-342–Phe-362 is activation loop. Asp-344 contacts ATP. Positions Trp-357–Trp-366 are important for interaction with membranes.

This sequence belongs to the PI3/PI4-kinase family. Type II PI4K subfamily. Widely expressed.

It is found in the cytoplasm. The protein localises to the cytosol. The protein resides in the golgi apparatus membrane. Its subcellular location is the endoplasmic reticulum membrane. It localises to the cell membrane. It is found in the early endosome membrane. The catalysed reaction is a 1,2-diacyl-sn-glycero-3-phospho-(1D-myo-inositol) + ATP = a 1,2-diacyl-sn-glycero-3-phospho-(1D-myo-inositol 4-phosphate) + ADP + H(+). With respect to regulation, inhibited by phenylarsine oxide and adenosine. Activation through membrane association is stimulated by active RAC1. Together with PI4K2A and the type III PI4Ks (PIK4CA and PIK4CB) it contributes to the overall PI4-kinase activity of the cell. This contribution may be especially significant in plasma membrane, endosomal and Golgi compartments. The phosphorylation of phosphatidylinositol (PI) to PI4P is the first committed step in the generation of phosphatidylinositol 4,5-bisphosphate (PIP2), a precursor of the second messenger inositol 1,4,5-trisphosphate (InsP3). Contributes to the production of InsP3 in stimulated cells and is likely to be involved in the regulation of vesicular trafficking. This Homo sapiens (Human) protein is Phosphatidylinositol 4-kinase type 2-beta (PI4K2B).